Here is a 393-residue protein sequence, read N- to C-terminus: Elongation factor Tu (393 aa).

Residues 10–203 (KPHVNIGTIG…AVDNYIPEPV (194 aa)) enclose the tr-type G domain. A G1 region spans residues 19 to 26 (GHVDHGKT). 19–26 (GHVDHGKT) contributes to the GTP binding site. Residue Thr-26 coordinates Mg(2+). Residues 60 to 64 (GITIS) are G2. The segment at 81–84 (DCPG) is G3. Residues 81–85 (DCPGH) and 136–139 (NKVD) contribute to the GTP site. Residues 136–139 (NKVD) form a G4 region. The G5 stretch occupies residues 173–175 (SAL).

This sequence belongs to the TRAFAC class translation factor GTPase superfamily. Classic translation factor GTPase family. EF-Tu/EF-1A subfamily. Monomer.

It is found in the cytoplasm. It carries out the reaction GTP + H2O = GDP + phosphate + H(+). GTP hydrolase that promotes the GTP-dependent binding of aminoacyl-tRNA to the A-site of ribosomes during protein biosynthesis. In Chlorobium phaeovibrioides (strain DSM 265 / 1930) (Prosthecochloris vibrioformis (strain DSM 265)), this protein is Elongation factor Tu.